We begin with the raw amino-acid sequence, 488 residues long: MGLEVGSLCFKLKDGGLTSRTNSFKRDDTNRHQNSPKSTMERSLSFNSWEVPKETKTDSDFEVLETKKSTPNTLNGRNCERIQIKKPTVTPPEPFVFFSPRPVTELDAAATTLQKVYKSYRTRRNLADCAVVVEELWWRTLEGAALDLSSVSFFGEEKHETAVSKWARARKRAAKVGKGLSKDEKAQKLALQHWLEAIDPRHRYGHNLHFYYDVWSASKSTQPFFYWLDIGDGKDVNLEKHPRSVLQKQCIRYLGPMEREAYEVIVEDGRLMYKQGMTLINSTEEAKSIFVLSTTRNLYVGIKKKGLFQHSSFLSGGATTAAGRLVARDGILEAIWPYSGHYLPTEDNFKEFISFLEEHNVDLTNVKRCSVNEEYSSFKSTADEEEERKEVSEEVEIPSEKEERARPVFDPVKRLSCKWTSGYGPRIGCVRDYPMELQAQALEQVSLSPRVSPANSYGPIPSPRPSPKVRVSPRLAYMGIPSPRAVKC.

The disordered stretch occupies residues Arg-20 to Phe-46. The segment covering His-32–Phe-46 has biased composition (polar residues). Residues Leu-106–Glu-135 enclose the IQ domain. Disordered regions lie at residues Ser-377 to Glu-403 and Ser-448 to Ser-472. Residues Arg-388–Glu-403 are compositionally biased toward basic and acidic residues.

As to quaternary structure, interacts (via IQ domain) with CAM5. In terms of tissue distribution, highly expressed in leaf mesophyll cells. Expressed in roots, rosette and cauline leaves, stems, flowers and siliques.

The protein resides in the cytoplasm. Its subcellular location is the nucleus. Functionally, involved in the modulation of stomatal movement. Promotes stomatal opening. May play a role in the regulation of chitin signaling. May be involved in biotic and abiotic stress responses. The chain is IQ domain-containing protein IQM1 from Arabidopsis thaliana (Mouse-ear cress).